Here is a 395-residue protein sequence, read N- to C-terminus: Protein PELOTA 2 (395 aa).

The protein belongs to the eukaryotic release factor 1 family. Pelota subfamily. Requires a divalent metal cation as cofactor.

Its subcellular location is the cytoplasm. The protein localises to the nucleus. Its function is as follows. Component of the Pelota-HBS1L complex, a complex that recognizes stalled ribosomes and triggers the No-Go Decay (NGD) pathway. In the Pelota-HBS1L complex, pelo recognizes ribosomes stalled at the 3' end of an mRNA and engages stalled ribosomes by destabilizing mRNA in the mRNA channel. Following ribosome-binding, the Pelota-HBS1L complex promotes the disassembly of stalled ribosomes, followed by degradation of damaged mRNAs as part of the NGD pathway. The polypeptide is Protein PELOTA 2 (PEL2) (Arabidopsis thaliana (Mouse-ear cress)).